A 109-amino-acid chain; its full sequence is Thiosulfate sulfurtransferase GlpE (109 aa).

In terms of domain architecture, Rhodanese spans 16–104; it reads RAEGAVVVDI…WRSTYPGETA (89 aa). Catalysis depends on C64, which acts as the Cysteine persulfide intermediate.

It belongs to the GlpE family.

It localises to the cytoplasm. It carries out the reaction thiosulfate + hydrogen cyanide = thiocyanate + sulfite + 2 H(+). The catalysed reaction is thiosulfate + [thioredoxin]-dithiol = [thioredoxin]-disulfide + hydrogen sulfide + sulfite + 2 H(+). In terms of biological role, transferase that catalyzes the transfer of sulfur from thiosulfate to thiophilic acceptors such as cyanide or dithiols. May function in a CysM-independent thiosulfate assimilation pathway by catalyzing the conversion of thiosulfate to sulfite, which can then be used for L-cysteine biosynthesis. This Pseudomonas entomophila (strain L48) protein is Thiosulfate sulfurtransferase GlpE.